Consider the following 380-residue polypeptide: Alpha-N-acetylneuraminate alpha-2,8-sialyltransferase ST8SIA3 (380 aa).

At 1 to 9 the chain is on the cytoplasmic side; it reads MRNCKMARV. A helical; Signal-anchor for type II membrane protein transmembrane segment spans residues 10–33; it reads ASVLGLVMLSVALLILSLISYVSL. The Lumenal portion of the chain corresponds to 34 to 380; the sequence is KKENIFTTPK…LTKLTLSHCA (347 aa). Residues Asn93, Asn113, and Asn160 are each glycosylated (N-linked (GlcNAc...) asparagine). Disulfide bonds link Cys162-Cys313 and Cys176-Cys379. CMP-N-acetyl-beta-neuraminate contacts are provided by Asn167 and Asn190. A glycan (N-linked (GlcNAc...) asparagine) is linked at Asn206. CMP-N-acetyl-beta-neuraminate-binding residues include Ser300, Thr301, Gly302, Trp322, Tyr336, and His337. The Proton donor/acceptor role is filled by His354.

Belongs to the glycosyltransferase 29 family. In terms of assembly, homodimer. Autopolysialylated. Expressed in fetal and adult brain and fetal liver.

The protein resides in the golgi apparatus membrane. It catalyses the reaction [N-acetyl-alpha-D-neuraminosyl-(2-&gt;8)](n) + CMP-N-acetyl-beta-neuraminate = [N-acetyl-alpha-D-neuraminosyl-(2-&gt;8)](n+1) + CMP + H(+). It carries out the reaction alpha-Neu5Ac-(2-&gt;3)-beta-D-Gal-(1-&gt;4)-6S-D-GlcNAc + CMP-N-acetyl-beta-neuraminate = alpha-Neu5Ac-(2-&gt;8)-alpha-Neu5Ac-(2-&gt;3)-beta-D-Gal-(1-&gt;4)-6S-D-GlcNAc + CMP + H(+). The enzyme catalyses a ganglioside GM3 (d18:1(4E)) + CMP-N-acetyl-beta-neuraminate = a ganglioside GD3 (d18:1(4E)) + CMP + H(+). The catalysed reaction is a ganglioside GM3 + CMP-N-acetyl-beta-neuraminate = a ganglioside GD3 + CMP + H(+). It catalyses the reaction an N-acetyl-alpha-neuraminyl-(2-&gt;3)-beta-D-galactosyl derivative + CMP-N-acetyl-beta-neuraminate = an N-acetyl-alpha-neuraminyl-(2-&gt;8)-N-acetyl-alpha-neuraminyl-(2-&gt;3)-beta-D-galactosyl derivative + CMP + H(+). It carries out the reaction an N-acetyl-alpha-neuraminyl-(2-&gt;3)-beta-D-galactosyl-(1-&gt;4)-N-acetyl-beta-D-glucosaminyl derivative + CMP-N-acetyl-beta-neuraminate = an alpha-Neu5Ac-(2-&gt;8)-alpha-Neu5Ac-(2-&gt;3)-beta-D-Gal-(1-&gt;4)-beta-D-GlcNAc derivative + CMP + H(+). It participates in protein modification; protein glycosylation. In terms of biological role, catalyzes the transfer of sialic acid from a CMP-linked sialic acid donor onto a terminal alpha-2,3-, alpha-2,6-, or alpha-2,8-linked sialic acid of an acceptor, such as N-linked oligosaccharides of glycoproteins and glycolipids through alpha-2,8-linkages. Forms oligosialic and polysialic acid on various sialylated N-acetyllactosamine oligosaccharides of glycoproteins, including FETUB N-glycans, a2-HS-glycoprotein (AHSG) and alpha 2,3-sialylated glycosphingolipids, such as alpha 2,3-sialylparagloboside and ganglioside GM3 and to a lesser extent NCAM1 N-glycans. However, it is much more specific to N-linked oligosaccharides of glycoproteins than glycosphingolipids. 2,3-sialylparagloboside serves as the best acceptor substrate among the glycolipids. alpha-Neu5Ac-(2-&gt;8)-alpha-Neu5Ac-(2-&gt;3)-beta-D-Gal-(1-&gt;4)-6S-D-GlcNAc and monosialyl and disialyl N-acetyllactosamines are the best acceptor substrates among glycoproteins. May plays critical role in the striatum by mediating the formation of disialylated and trisialylated terminal glycotopes on N- and O-glycans of specific striatal proteins, regulating their distribution in lipid rafts, affecting their interaction with other binding partners, and subsequently modulating striatal functions. The chain is Alpha-N-acetylneuraminate alpha-2,8-sialyltransferase ST8SIA3 from Homo sapiens (Human).